Consider the following 460-residue polypeptide: Glutamyl-tRNA reductase (460 aa).

Substrate contacts are provided by residues 48–51, Ser100, 105–107, and Gln111; these read TCNR and EDQ. Cys49 acts as the Nucleophile in catalysis. 180–185 is a binding site for NADP(+); that stretch reads GAGEIG.

The protein belongs to the glutamyl-tRNA reductase family. In terms of assembly, homodimer.

It carries out the reaction (S)-4-amino-5-oxopentanoate + tRNA(Glu) + NADP(+) = L-glutamyl-tRNA(Glu) + NADPH + H(+). It functions in the pathway porphyrin-containing compound metabolism; protoporphyrin-IX biosynthesis; 5-aminolevulinate from L-glutamyl-tRNA(Glu): step 1/2. Functionally, catalyzes the NADPH-dependent reduction of glutamyl-tRNA(Glu) to glutamate 1-semialdehyde (GSA). This chain is Glutamyl-tRNA reductase, found in Methanosarcina acetivorans (strain ATCC 35395 / DSM 2834 / JCM 12185 / C2A).